A 504-amino-acid chain; its full sequence is Probable cytosol aminopeptidase (504 aa).

Lys274 and Asp279 together coordinate Mn(2+). Lys286 is an active-site residue. Mn(2+) contacts are provided by Asp297, Asp356, and Glu358. Residue Arg360 is part of the active site.

Belongs to the peptidase M17 family. It depends on Mn(2+) as a cofactor.

It is found in the cytoplasm. It catalyses the reaction Release of an N-terminal amino acid, Xaa-|-Yaa-, in which Xaa is preferably Leu, but may be other amino acids including Pro although not Arg or Lys, and Yaa may be Pro. Amino acid amides and methyl esters are also readily hydrolyzed, but rates on arylamides are exceedingly low.. The catalysed reaction is Release of an N-terminal amino acid, preferentially leucine, but not glutamic or aspartic acids.. In terms of biological role, presumably involved in the processing and regular turnover of intracellular proteins. Catalyzes the removal of unsubstituted N-terminal amino acids from various peptides. In Gloeobacter violaceus (strain ATCC 29082 / PCC 7421), this protein is Probable cytosol aminopeptidase.